Consider the following 530-residue polypeptide: 5-aminolevulinate synthase, mitochondrial (530 aa).

The transit peptide at 1–26 (MFRPVLKVRPSFSYPYSIVSSRSVRL) directs the protein to the mitochondrion. The substrate site is built by R73, S186, and K205. S238, H266, and T316 together coordinate pyridoxal 5'-phosphate. The active site involves K319. Residue K319 is modified to N6-(pyridoxal phosphate)lysine. Pyridoxal 5'-phosphate contacts are provided by T348 and T349. T434 contributes to the substrate binding site.

This sequence belongs to the class-II pyridoxal-phosphate-dependent aminotransferase family. Homodimer. Pyridoxal 5'-phosphate is required as a cofactor.

The protein resides in the mitochondrion matrix. The enzyme catalyses succinyl-CoA + glycine + H(+) = 5-aminolevulinate + CO2 + CoA. It participates in porphyrin-containing compound metabolism; protoporphyrin-IX biosynthesis; 5-aminolevulinate from glycine: step 1/1. Its function is as follows. Catalyzes the synthesis of 5-aminolevulinate (ALA) from succinyl-CoA and glycine, the first and rate-limiting step in heme biosynthesis. The sequence is that of 5-aminolevulinate synthase, mitochondrial (HEM1) from Candida glabrata (strain ATCC 2001 / BCRC 20586 / JCM 3761 / NBRC 0622 / NRRL Y-65 / CBS 138) (Yeast).